A 117-amino-acid polypeptide reads, in one-letter code: Hemerythrin subunit alpha (117 aa).

7 residues coordinate Fe cation: H24, H53, E57, H72, H76, H105, and D110.

Belongs to the hemerythrin family. In terms of assembly, octamer composed of two types of chains: alpha and beta.

Functionally, hemerythrin is a respiratory protein in blood cells of certain marine worms. The oxygen-binding site in each chain contains two iron atoms. The polypeptide is Hemerythrin subunit alpha (Lingula reevii (Inarticulated brachiopod)).